Consider the following 300-residue polypeptide: Protoheme IX farnesyltransferase (300 aa).

Transmembrane regions (helical) follow at residues 24 to 44, 46 to 66, 99 to 119, 122 to 142, 145 to 165, 176 to 196, 220 to 240, 244 to 264, and 275 to 295; these read GLAI…IHEF, LETI…VGAS, AFTI…MINP, AMFG…LKTV, LSVF…WVAA, LFLI…WFLF, IVLY…GYTG, LTPV…VYAI, and AKTL…VYIL.

It belongs to the UbiA prenyltransferase family. Protoheme IX farnesyltransferase subfamily.

It is found in the cell inner membrane. The enzyme catalyses heme b + (2E,6E)-farnesyl diphosphate + H2O = Fe(II)-heme o + diphosphate. The protein operates within porphyrin-containing compound metabolism; heme O biosynthesis; heme O from protoheme: step 1/1. Converts heme B (protoheme IX) to heme O by substitution of the vinyl group on carbon 2 of heme B porphyrin ring with a hydroxyethyl farnesyl side group. The polypeptide is Protoheme IX farnesyltransferase (Flavobacterium psychrophilum (strain ATCC 49511 / DSM 21280 / CIP 103535 / JIP02/86)).